Here is a 193-residue protein sequence, read N- to C-terminus: D-alanyl-D-alanine dipeptidase (193 aa).

His98 and Asp105 together coordinate Zn(2+). The active-site Proton donor/acceptor is the Glu162. His165 is a binding site for Zn(2+).

This sequence belongs to the peptidase M15D family. The cofactor is Zn(2+).

It localises to the cytoplasm. The enzyme catalyses D-alanyl-D-alanine + H2O = 2 D-alanine. Catalyzes hydrolysis of the D-alanyl-D-alanine dipeptide. May have a role in cell-wall turnover. This chain is D-alanyl-D-alanine dipeptidase, found in Escherichia coli (strain K12).